The following is a 161-amino-acid chain: Nucleotide-binding protein PputW619_0959 (161 aa).

It belongs to the YajQ family.

In terms of biological role, nucleotide-binding protein. The chain is Nucleotide-binding protein PputW619_0959 from Pseudomonas putida (strain W619).